A 492-amino-acid chain; its full sequence is Auxin transporter-like protein 1 (492 aa).

Topologically, residues 1-67 are cytoplasmic; the sequence is MVPREQAEEA…DAWFSCASNQ (67 aa). The chain crosses the membrane as a helical span at residues 68–85; sequence VAQVLLTLPYSFSQLGML. The Extracellular segment spans residues 86 to 87; it reads SG. Residues 88-108 traverse the membrane as a helical segment; that stretch reads VLLQLFYGFMGSWTAYLISVL. At 109 to 143 the chain is on the cytoplasmic side; it reads YVEYRSRKEKEGVSFKNHVIQWFEVLDGLLGPYWK. The helical transmembrane segment at 144-164 threads the bilayer; sequence AAGLAFNCTFLLFGSVIQLIA. At 165-180 the chain is on the extracellular side; that stretch reads CASNIYYINDRLDKRT. A helical transmembrane segment spans residues 181-201; it reads WTYIFGACCATTVFIPSFHNY. Residue Arg202 is a topological domain, cytoplasmic. A helical transmembrane segment spans residues 203-223; the sequence is IWSFLGLGMTTYTAWYLAIAA. At 224–240 the chain is on the extracellular side; it reads LLNGQAEGITHTGPTKL. The helical transmembrane segment at 241-261 threads the bilayer; the sequence is VLYFTGATNILYTFGGHAVTV. Residues 262–274 are Cytoplasmic-facing; sequence EIMHAMWKPAKFK. Residues 275-295 form a helical membrane-spanning segment; that stretch reads YIYLLATLYVFTLTLPSASAM. Topologically, residues 296–322 are extracellular; it reads YWAFGDELLTHSNAFSLLPKTGWRDAA. Residues 323–343 form a helical membrane-spanning segment; that stretch reads VILMLIHQFITFGFACTPLYF. Residues 344-364 are Cytoplasmic-facing; the sequence is VWEKVIGMHDTKSICLRALAR. The chain crosses the membrane as a helical span at residues 365-385; that stretch reads LPIVVPIWFLAIIFPFFGPIN. A topological domain (extracellular) is located at residue Ser386. The chain crosses the membrane as a helical span at residues 387-407; it reads AVGALLVSFTVYIIPALAHIL. Residues 408 to 432 are Cytoplasmic-facing; the sequence is TYRTASARMNAAEKPPFFLPSWTGM. Residues 433–453 form a helical membrane-spanning segment; it reads FVLNMFIVVWVLVVGFGLGGW. Topologically, residues 454 to 492 are extracellular; it reads ASMVNFIRQIDTFGLFAKCYQCPKPAPALAQSPVPLPHH.

This sequence belongs to the amino acid/polyamine transporter 2 family. Amino acid/auxin permease (AAAP) (TC 2.A.18.1) subfamily.

The protein localises to the cell membrane. Its function is as follows. Carrier protein involved in proton-driven auxin influx. May mediate the formation of auxin gradient from developing leaves (site of auxin biosynthesis) to tips. This chain is Auxin transporter-like protein 1, found in Oryza sativa subsp. japonica (Rice).